Consider the following 398-residue polypeptide: NADH-quinone oxidoreductase subunit D (398 aa).

It belongs to the complex I 49 kDa subunit family. NDH-1 is composed of 14 different subunits. Subunits NuoB, C, D, E, F, and G constitute the peripheral sector of the complex.

Its subcellular location is the cell inner membrane. The catalysed reaction is a quinone + NADH + 5 H(+)(in) = a quinol + NAD(+) + 4 H(+)(out). NDH-1 shuttles electrons from NADH, via FMN and iron-sulfur (Fe-S) centers, to quinones in the respiratory chain. The immediate electron acceptor for the enzyme in this species is believed to be ubiquinone. Couples the redox reaction to proton translocation (for every two electrons transferred, four hydrogen ions are translocated across the cytoplasmic membrane), and thus conserves the redox energy in a proton gradient. The polypeptide is NADH-quinone oxidoreductase subunit D (Bradyrhizobium diazoefficiens (strain JCM 10833 / BCRC 13528 / IAM 13628 / NBRC 14792 / USDA 110)).